A 212-amino-acid polypeptide reads, in one-letter code: Thymidylate kinase (212 aa).

Gly10 to Ser17 is a binding site for ATP.

This sequence belongs to the thymidylate kinase family.

The catalysed reaction is dTMP + ATP = dTDP + ADP. In terms of biological role, phosphorylation of dTMP to form dTDP in both de novo and salvage pathways of dTTP synthesis. The sequence is that of Thymidylate kinase from Exiguobacterium sp. (strain ATCC BAA-1283 / AT1b).